The sequence spans 444 residues: Glutamyl-tRNA reductase (444 aa).

Residues 49 to 52 (TCNR), Ser109, 114 to 116 (ETQ), and Gln120 contribute to the substrate site. Cys50 acts as the Nucleophile in catalysis. 189–194 (GAGKMG) is an NADP(+) binding site.

Belongs to the glutamyl-tRNA reductase family. As to quaternary structure, homodimer.

It catalyses the reaction (S)-4-amino-5-oxopentanoate + tRNA(Glu) + NADP(+) = L-glutamyl-tRNA(Glu) + NADPH + H(+). It functions in the pathway porphyrin-containing compound metabolism; protoporphyrin-IX biosynthesis; 5-aminolevulinate from L-glutamyl-tRNA(Glu): step 1/2. In terms of biological role, catalyzes the NADPH-dependent reduction of glutamyl-tRNA(Glu) to glutamate 1-semialdehyde (GSA). This is Glutamyl-tRNA reductase from Bacillus cereus (strain ZK / E33L).